We begin with the raw amino-acid sequence, 426 residues long: Serine hydroxymethyltransferase (426 aa).

Residues Leu-122 and 126–128 (GHL) contribute to the (6S)-5,6,7,8-tetrahydrofolate site. An N6-(pyridoxal phosphate)lysine modification is found at Lys-231.

It belongs to the SHMT family. As to quaternary structure, homodimer. The cofactor is pyridoxal 5'-phosphate.

The protein resides in the cytoplasm. The catalysed reaction is (6R)-5,10-methylene-5,6,7,8-tetrahydrofolate + glycine + H2O = (6S)-5,6,7,8-tetrahydrofolate + L-serine. It participates in one-carbon metabolism; tetrahydrofolate interconversion. Its pathway is amino-acid biosynthesis; glycine biosynthesis; glycine from L-serine: step 1/1. Catalyzes the reversible interconversion of serine and glycine with tetrahydrofolate (THF) serving as the one-carbon carrier. This reaction serves as the major source of one-carbon groups required for the biosynthesis of purines, thymidylate, methionine, and other important biomolecules. Also exhibits THF-independent aldolase activity toward beta-hydroxyamino acids, producing glycine and aldehydes, via a retro-aldol mechanism. The polypeptide is Serine hydroxymethyltransferase (Koribacter versatilis (strain Ellin345)).